We begin with the raw amino-acid sequence, 23 residues long: Brevinin-1Eb (23 aa).

A disulfide bridge connects residues cysteine 17 and cysteine 23.

The protein belongs to the frog skin active peptide (FSAP) family. Brevinin subfamily. Expressed by the skin glands.

Its subcellular location is the secreted. Its function is as follows. Shows antibacterial activity against representative Gram-negative and Gram-positive bacterial species, and a very high hemolytic activity. The protein is Brevinin-1Eb of Pelophylax lessonae (Pool frog).